The sequence spans 37 residues: Large ribosomal subunit protein bL36A (37 aa).

It belongs to the bacterial ribosomal protein bL36 family.

The chain is Large ribosomal subunit protein bL36A from Actinobacillus pleuropneumoniae serotype 3 (strain JL03).